The following is a 247-amino-acid chain: Uridylate kinase (247 aa).

21–24 (KVSG) provides a ligand contact to ATP. Glycine 63 provides a ligand contact to UMP. Residues glycine 64 and arginine 68 each contribute to the ATP site. Residues aspartate 83 and 144–151 (TGNPFCTT) each bind UMP. The ATP site is built by threonine 171, glutamine 172, tyrosine 177, and aspartate 180.

It belongs to the UMP kinase family. Homohexamer.

Its subcellular location is the cytoplasm. It carries out the reaction UMP + ATP = UDP + ADP. It functions in the pathway pyrimidine metabolism; CTP biosynthesis via de novo pathway; UDP from UMP (UMPK route): step 1/1. With respect to regulation, inhibited by UTP. Catalyzes the reversible phosphorylation of UMP to UDP. The sequence is that of Uridylate kinase from Rickettsia rickettsii (strain Sheila Smith).